The chain runs to 189 residues: Large ribosomal subunit protein bL9 (189 aa).

It belongs to the bacterial ribosomal protein bL9 family.

In terms of biological role, binds to the 23S rRNA. This Cereibacter sphaeroides (strain KD131 / KCTC 12085) (Rhodobacter sphaeroides) protein is Large ribosomal subunit protein bL9.